A 176-amino-acid chain; its full sequence is Probable inosine/xanthosine triphosphatase (176 aa).

D36 lines the Mg(2+) pocket.

This sequence belongs to the YjjX NTPase family. As to quaternary structure, homodimer. It depends on Mg(2+) as a cofactor. Requires Mn(2+) as cofactor.

The enzyme catalyses XTP + H2O = XDP + phosphate + H(+). It catalyses the reaction ITP + H2O = IDP + phosphate + H(+). Its function is as follows. Phosphatase that hydrolyzes non-canonical purine nucleotides such as XTP and ITP to their respective diphosphate derivatives. Probably excludes non-canonical purines from DNA/RNA precursor pool, thus preventing their incorporation into DNA/RNA and avoiding chromosomal lesions. This chain is Probable inosine/xanthosine triphosphatase, found in Saccharolobus islandicus (strain Y.G.57.14 / Yellowstone #1) (Sulfolobus islandicus).